A 224-amino-acid chain; its full sequence is Ribonuclease HII (224 aa).

Positions 1–210 constitute an RNase H type-2 domain; the sequence is MKVAGADEAG…AKKIEEKFKR (210 aa). 3 residues coordinate a divalent metal cation: D7, E8, and D105.

Belongs to the RNase HII family. Requires Mn(2+) as cofactor. Mg(2+) is required as a cofactor.

The protein resides in the cytoplasm. The catalysed reaction is Endonucleolytic cleavage to 5'-phosphomonoester.. In terms of biological role, endonuclease that specifically degrades the RNA of RNA-DNA hybrids. This is Ribonuclease HII (rnhB) from Pyrococcus abyssi (strain GE5 / Orsay).